A 97-amino-acid chain; its full sequence is Eotaxin (97 aa).

A signal peptide spans 1-23 (MQSSTALLFLLLTVTSFTSQVLA). 2 cysteine pairs are disulfide-bonded: Cys32-Cys57 and Cys33-Cys73. O-linked (GalNAc...) threonine glycosylation is present at Thr94.

The protein belongs to the intercrine beta (chemokine CC) family. As to expression, expressed constitutively in the thymus. Expression inducible in the lung (type I alveolar epithelial cells), intestine, heart, spleen, kidney.

Its subcellular location is the secreted. In response to the presence of allergens, this protein directly promotes the accumulation of eosinophils (a prominent feature of allergic inflammatory reactions), but not lymphocytes, macrophages or neutrophils. Binds to CCR3. This Mus musculus (Mouse) protein is Eotaxin (Ccl11).